Consider the following 105-residue polypeptide: Large ribosomal subunit protein eL36 (105 aa).

K62 carries the post-translational modification N6-acetyllysine.

It belongs to the eukaryotic ribosomal protein eL36 family. Component of the large ribosomal subunit.

Its subcellular location is the cytoplasm. The protein resides in the cytosol. Component of the large ribosomal subunit. The ribosome is a large ribonucleoprotein complex responsible for the synthesis of proteins in the cell. The chain is Large ribosomal subunit protein eL36 (RPL36) from Bos taurus (Bovine).